The following is a 91-amino-acid chain: UPF0250 protein PSPTO_4820 (91 aa).

Belongs to the UPF0250 family.

The sequence is that of UPF0250 protein PSPTO_4820 from Pseudomonas syringae pv. tomato (strain ATCC BAA-871 / DC3000).